The chain runs to 820 residues: Phosphoenolpyruvate synthase (820 aa).

The active-site Tele-phosphohistidine intermediate is the histidine 438. Substrate contacts are provided by arginine 539, arginine 587, glutamate 689, glycine 710, serine 711, asparagine 712, and aspartate 713. Glutamate 689 is a Mg(2+) binding site. Aspartate 713 provides a ligand contact to Mg(2+). Cysteine 762 (proton donor) is an active-site residue.

The protein belongs to the PEP-utilizing enzyme family. Mg(2+) is required as a cofactor.

It carries out the reaction pyruvate + ATP + H2O = phosphoenolpyruvate + AMP + phosphate + 2 H(+). Its pathway is carbohydrate biosynthesis; gluconeogenesis. In terms of biological role, catalyzes the phosphorylation of pyruvate to phosphoenolpyruvate. In Aeropyrum pernix (strain ATCC 700893 / DSM 11879 / JCM 9820 / NBRC 100138 / K1), this protein is Phosphoenolpyruvate synthase (ppsA).